Consider the following 210-residue polypeptide: SAP domain-containing ribonucleoprotein (210 aa).

At Ala-2 the chain carries N-acetylalanine. The 35-residue stretch at 8 to 42 (LHKLKLAELKQECLARGLETKGIKQDLINRLQAYL) folds into the SAP domain. Lys-10 bears the N6-acetyllysine mark. Residues 45 to 64 (HAEEEANEEDVLGDETEEEE) show a composition bias toward acidic residues. The disordered stretch occupies residues 45–87 (HAEEEANEEDVLGDETEEEEPKPIELPVKEEEPPEKAVDMASE). Over residues 65–87 (PKPIELPVKEEEPPEKAVDMASE) the composition is skewed to basic and acidic residues. The residue at position 142 (Lys-142) is an N6-acetyllysine. Residues 162-210 (SSISRKSEDDEKLKKRKERFGIVTSSAGTGTTEDTEAKKRKRAERFGIA) form a disordered region. Ser-163 carries the post-translational modification Phosphoserine. The span at 184–193 (VTSSAGTGTT) shows a compositional bias: polar residues.

This sequence belongs to the SAP domain-containing ribonucleoprotein family. As to quaternary structure, interacts with DDX39A. Interacts with FUS. Interacts (via the C-terminal domain) with DDX39B; the interaction is direct and facilitates RNA binding of DDX39B. Component of the transcription/export (TREX) complex at least composed of ALYREF/THOC4, DDX39B, SARNP/CIP29, CHTOP and the THO subcomplex; TREX seems to have dynamic structure involving ATP-dependent remodeling; in the complex interacts directly with DDX39B in a ATP-dependent manner which bridges it to ALYREF/THOC4.

It is found in the nucleus. It localises to the nucleus speckle. Its function is as follows. Binds both single-stranded and double-stranded DNA with higher affinity for the single-stranded form. Specifically binds to scaffold/matrix attachment region DNA. Also binds single-stranded RNA. Enhances RNA unwinding activity of DDX39A. May participate in important transcriptional or translational control of cell growth, metabolism and carcinogenesis. Component of the TREX complex which is thought to couple mRNA transcription, processing and nuclear export, and specifically associates with spliced mRNA and not with unspliced pre-mRNA. The TREX complex is recruited to spliced mRNAs by a transcription-independent mechanism, binds to mRNA upstream of the exon-junction complex (EJC) and is recruited in a splicing- and cap-dependent manner to a region near the 5' end of the mRNA where it functions in mRNA export to the cytoplasm via the TAP/NXF1 pathway. Associates with DDX39B, which facilitates RNA binding of DDX39B and likely plays a role in mRNA export. The polypeptide is SAP domain-containing ribonucleoprotein (Sarnp) (Mus musculus (Mouse)).